The chain runs to 55 residues: Large ribosomal subunit protein bL33 (55 aa).

It belongs to the bacterial ribosomal protein bL33 family.

This chain is Large ribosomal subunit protein bL33, found in Chelativorans sp. (strain BNC1).